The chain runs to 234 residues: NLP effector protein 10 (234 aa).

The signal sequence occupies residues 1–17 (MFKTFIIAAVAVATVRA). An N-linked (GlcNAc...) asparagine glycan is attached at Asn-65. A Conserved undecapeptide motif I motif is present at residues 101–111 (AIMYSWYFPKD). The Hepta-peptide GHRHDWE motif II motif lies at 118–124 (GHRHDWE).

Belongs to the Necrosis inducing protein (NPP1) family.

Its subcellular location is the secreted. In terms of biological role, secreted effector that contributes moderately to virulence during infection by P.capsici. Does not cause visible reaction of C.annuum for several days after inoculation, but by 7 days after inoculation, small necrotic lesions become visible. Leads only to chlorotic areas, without necrosis at 7 days after non-host N.benthamiana leaves infection. The chain is NLP effector protein 10 from Phytophthora capsici.